The sequence spans 185 residues: Ribosome-recycling factor (185 aa).

This sequence belongs to the RRF family.

The protein localises to the cytoplasm. Its function is as follows. Responsible for the release of ribosomes from messenger RNA at the termination of protein biosynthesis. May increase the efficiency of translation by recycling ribosomes from one round of translation to another. The sequence is that of Ribosome-recycling factor from Aliivibrio fischeri (strain ATCC 700601 / ES114) (Vibrio fischeri).